The chain runs to 654 residues: Myrosinase-binding protein 2 (654 aa).

Jacalin-type lectin domains are found at residues 2-151 (SEKV…HFFA), 156-291 (LKHF…HFAP), 346-489 (PNKV…YFAP), and 502-645 (AKKL…HAVP). A compositionally biased stretch (pro residues) spans 314 to 346 (VPAPSPAPAPSPAPAPAPAPAPAPTPAPAPAPP). Residues 314-355 (VPAPSPAPAPSPAPAPAPAPAPAPTPAPAPAPPNKVEALGGN) are disordered.

It belongs to the jacalin lectin family. In terms of tissue distribution, expressed in flowers. Detected mainly in ovules and styles of immature flowers, but also in pistils, styles, stamens, petals and embryos. Not detected in leaves.

The polypeptide is Myrosinase-binding protein 2 (MBP2) (Arabidopsis thaliana (Mouse-ear cress)).